Here is a 624-residue protein sequence, read N- to C-terminus: Aliphatic sulfonate oxidoreductase, WOR-like subunit (624 aa).

Residues Lys-77, Ser-93, Val-94, Ser-96, His-195, Ala-196, Gly-198, and Tyr-199 each coordinate tungstopterin. Residues Asp-299, Cys-302, and Cys-306 each coordinate [4Fe-4S] cluster. Residues Asp-353, Leu-357, Asp-358, Gly-359, Thr-470, Asp-490, Ile-494, Cys-495, and Asn-496 each contribute to the tungstopterin site. [4Fe-4S] cluster is bound at residue Cys-495. Residues 552 to 575 (KDDDNPPRFYEPLPSGPVKGKAPN) are disordered.

This sequence belongs to the AOR/FOR family. As to quaternary structure, heterodimer composed of a small WOR5-S subunit, with four [4Fe-4S] clusters, and a large WOR5-L subunit, containing the active site tungsto-bispyranopterin cofactor as well as another [4Fe-4S] cluster. It depends on [4Fe-4S] cluster as a cofactor. Tungstopterin serves as cofactor.

The protein localises to the cytoplasm. The catalysed reaction is an aliphatic sulfonate + 4 oxidized [4Fe-4S]-[ferredoxin] + 2 H2O = 4 reduced [4Fe-4S]-[ferredoxin] + a carboxylate + sulfite + 6 H(+). The enzyme catalyses an aliphatic sulfonate + 2 oxidized [4Fe-4S]-[ferredoxin] + H2O = 2 reduced [4Fe-4S]-[ferredoxin] + an aldehyde + sulfite + 3 H(+). It catalyses the reaction 2 oxidized [4Fe-4S]-[ferredoxin] + an aldehyde + H2O = 2 reduced [4Fe-4S]-[ferredoxin] + a carboxylate + 3 H(+). It carries out the reaction 4 oxidized [4Fe-4S]-[ferredoxin] + taurine + 2 H2O = 4 reduced [4Fe-4S]-[ferredoxin] + sulfite + glycine + 6 H(+). The catalysed reaction is 2 oxidized [4Fe-4S]-[ferredoxin] + taurine + H2O = aminoacetaldehyde + 2 reduced [4Fe-4S]-[ferredoxin] + sulfite + 3 H(+). The enzyme catalyses aminoacetaldehyde + 2 oxidized [4Fe-4S]-[ferredoxin] + H2O = 2 reduced [4Fe-4S]-[ferredoxin] + glycine + 3 H(+). In terms of biological role, WOR-like catalytic subunit of an oxidoreductase that can desulfonate and oxidize aliphatic sulfonates such as taurine. The activity involves two steps: an oxidative desulfonation reaction, followed by the activation of a second water molecule and oxidation of the resulting aldehyde. May be involved in the oxidation of various aliphatic sulfonates and also phosphonates. In vitro, has a broad substrate specificity with a high affinity for several substituted and nonsubstituted aliphatic and aromatic aldehydes with various chain lengths, with methyl viologen or benzyl viologen as electron acceptor. Ferredoxin is the physiological electron acceptor. The sequence is that of Aliphatic sulfonate oxidoreductase, WOR-like subunit from Pyrococcus furiosus (strain ATCC 43587 / DSM 3638 / JCM 8422 / Vc1).